The following is a 122-amino-acid chain: UPF0102 protein VCM66_0538 (122 aa).

It belongs to the UPF0102 family.

The sequence is that of UPF0102 protein VCM66_0538 from Vibrio cholerae serotype O1 (strain M66-2).